Consider the following 274-residue polypeptide: Thiazole synthase (274 aa).

The Schiff-base intermediate with DXP role is filled by Lys115. Residues Gly176, 202-203 (AG), and 224-225 (NS) each bind 1-deoxy-D-xylulose 5-phosphate.

Belongs to the ThiG family. As to quaternary structure, homotetramer. Forms heterodimers with either ThiH or ThiS.

It is found in the cytoplasm. It catalyses the reaction [ThiS sulfur-carrier protein]-C-terminal-Gly-aminoethanethioate + 2-iminoacetate + 1-deoxy-D-xylulose 5-phosphate = [ThiS sulfur-carrier protein]-C-terminal Gly-Gly + 2-[(2R,5Z)-2-carboxy-4-methylthiazol-5(2H)-ylidene]ethyl phosphate + 2 H2O + H(+). The protein operates within cofactor biosynthesis; thiamine diphosphate biosynthesis. Its function is as follows. Catalyzes the rearrangement of 1-deoxy-D-xylulose 5-phosphate (DXP) to produce the thiazole phosphate moiety of thiamine. Sulfur is provided by the thiocarboxylate moiety of the carrier protein ThiS. In vitro, sulfur can be provided by H(2)S. The protein is Thiazole synthase of Psychrobacter cryohalolentis (strain ATCC BAA-1226 / DSM 17306 / VKM B-2378 / K5).